A 476-amino-acid polypeptide reads, in one-letter code: Adenosylhomocysteinase (476 aa).

Thr-67, Asp-142, and Glu-202 together coordinate substrate. 203–205 (TTT) lines the NAD(+) pocket. The substrate site is built by Lys-232 and Asp-236. NAD(+) contacts are provided by residues Asn-237, 266–271 (GYGDVG), Glu-289, Asn-324, 345–347 (IGH), and Asn-390.

Belongs to the adenosylhomocysteinase family. It depends on NAD(+) as a cofactor.

It localises to the cytoplasm. It carries out the reaction S-adenosyl-L-homocysteine + H2O = L-homocysteine + adenosine. It participates in amino-acid biosynthesis; L-homocysteine biosynthesis; L-homocysteine from S-adenosyl-L-homocysteine: step 1/1. May play a key role in the regulation of the intracellular concentration of adenosylhomocysteine. In Synechococcus sp. (strain CC9605), this protein is Adenosylhomocysteinase.